The chain runs to 340 residues: Mitochondrial glycine transporter (340 aa).

Solcar repeat units follow at residues 23-108 (PKTL…ARNG), 128-218 (LSPF…FKND), and 237-325 (RSTI…LIKS). The next 6 helical transmembrane spans lie at 29–54 (LISG…TRLQ), 83–109 (GALP…RNGI), 134–159 (LATG…TRYE), 193–216 (GSFA…ELFK), 241–267 (INTS…KTRL), and 300–318 (GLSL…SWCI).

The protein belongs to the mitochondrial carrier (TC 2.A.29) family. SLC25A38 subfamily.

The protein resides in the mitochondrion inner membrane. The catalysed reaction is glycine(in) = glycine(out). Functionally, mitochondrial glycine transporter that imports glycine into the mitochondrial matrix. Plays an important role in providing glycine for the first enzymatic step in heme biosynthesis, the condensation of glycine with succinyl-CoA to produce 5-aminolevulinate (ALA) in the mitochondrial matrix. The protein is Mitochondrial glycine transporter of Debaryomyces hansenii (strain ATCC 36239 / CBS 767 / BCRC 21394 / JCM 1990 / NBRC 0083 / IGC 2968) (Yeast).